Reading from the N-terminus, the 80-residue chain is MTTTMKIMSFAMLLVLLFSIDVVEGSGSSLCCNTHAKFGACNTYQDRKRCNKWCLDGCDNKKGGFCKRFAGGAKKCHCYC.

Residues 1 to 25 (MTTTMKIMSFAMLLVLLFSIDVVEG) form the signal peptide. 4 disulfide bridges follow: Cys-31-Cys-80, Cys-41-Cys-66, Cys-50-Cys-76, and Cys-54-Cys-78.

It belongs to the DEFL family.

The protein resides in the secreted. This Arabidopsis thaliana (Mouse-ear cress) protein is Putative defensin-like protein 23.